The chain runs to 368 residues: CST complex subunit STN1 (368 aa).

The interaction with CTC1 stretch occupies residues 2-192 (AVSLGDDDAD…KCYDQPFKMP (191 aa)). A DNA-binding region (OB) is located at residues 58–162 (VDVLGIVVYK…EIKATSFYKV (105 aa)). Winged helix-turn-helix (wHTH) regions lie at residues 201–295 (AGGS…NVTE) and 296–368 (QDKD…YIVL).

It belongs to the CTC1 family. Component of the CST complex.

It is found in the nucleus. The protein resides in the chromosome. The protein localises to the telomere. In terms of biological role, component of the CST complex proposed to act as a specialized replication factor promoting DNA replication under conditions of replication stress or natural replication barriers such as the telomere duplex. The CST complex binds single-stranded DNA with high affinity in a sequence-independent manner, while isolated subunits bind DNA with low affinity by themselves. Initially the CST complex has been proposed to protect telomeres from DNA degradation. However, the CST complex has been shown to be involved in several aspects of telomere replication. This is CST complex subunit STN1 from Danio rerio (Zebrafish).